Reading from the N-terminus, the 196-residue chain is Pyroglutamyl-peptidase 1-like protein (196 aa).

Catalysis depends on residues Glu-65, Cys-127, and His-146.

Belongs to the peptidase C15 family.

This Homo sapiens (Human) protein is Pyroglutamyl-peptidase 1-like protein (PGPEP1L).